Reading from the N-terminus, the 305-residue chain is Ribosomal RNA large subunit methyltransferase F (305 aa).

It belongs to the methyltransferase superfamily. METTL16/RlmF family.

Its subcellular location is the cytoplasm. The catalysed reaction is adenosine(1618) in 23S rRNA + S-adenosyl-L-methionine = N(6)-methyladenosine(1618) in 23S rRNA + S-adenosyl-L-homocysteine + H(+). Functionally, specifically methylates the adenine in position 1618 of 23S rRNA. This chain is Ribosomal RNA large subunit methyltransferase F, found in Enterobacter sp. (strain 638).